The primary structure comprises 215 residues: 3,4-dihydroxy-2-butanone 4-phosphate synthase (215 aa).

Residues 38-39 (RE), Asp-43, 151-155 (RRGHT), and Glu-175 contribute to the D-ribulose 5-phosphate site. Residue Glu-39 participates in Mg(2+) binding. Position 154 (His-154) interacts with Mg(2+).

The protein belongs to the DHBP synthase family. As to quaternary structure, homodimer. Mg(2+) serves as cofactor. The cofactor is Mn(2+).

It carries out the reaction D-ribulose 5-phosphate = (2S)-2-hydroxy-3-oxobutyl phosphate + formate + H(+). It participates in cofactor biosynthesis; riboflavin biosynthesis; 2-hydroxy-3-oxobutyl phosphate from D-ribulose 5-phosphate: step 1/1. Its function is as follows. Catalyzes the conversion of D-ribulose 5-phosphate to formate and 3,4-dihydroxy-2-butanone 4-phosphate. This chain is 3,4-dihydroxy-2-butanone 4-phosphate synthase, found in Haemophilus influenzae (strain PittGG).